The chain runs to 170 residues: Elicitin-like protein 1 (170 aa).

An N-terminal signal peptide occupies residues 1 to 19 (MFSKTLVVLAAVAAVTVNG). 3 cysteine pairs are disulfide-bonded: cysteine 25-cysteine 91, cysteine 47-cysteine 76, and cysteine 71-cysteine 118. A disordered region spans residues 122–170 (GGGSTPTTAPPTSTTPTTAPPTGTTPTTAPPAGTTPGVTPSPTTPKPAC). The segment covering 126-162 (TPTTAPPTSTTPTTAPPTGTTPTTAPPAGTTPGVTPS) has biased composition (low complexity).

This sequence belongs to the elicitin family.

It localises to the secreted. Its function is as follows. Induces local and distal defense responses (incompatible hypersensitive reaction) in plants from the solanaceae and cruciferae families. Elicits leaf necrosis and causes the accumulation of pathogenesis-related proteins. Might interact with the lipidic molecules of the plasma membrane. The chain is Elicitin-like protein 1 (POD-1) from Pythium oligandrum (Mycoparasitic fungus).